The following is a 276-amino-acid chain: Glucosamine-6-phosphate deaminase 2 (276 aa).

D72 acts as the Proton acceptor; for enolization step in catalysis. The stretch at 105 to 130 (HILDGNAADLQAECDAFENKIKEAGG) forms a coiled coil. D141 functions as the For ring-opening step in the catalytic mechanism. The Proton acceptor; for ring-opening step role is filled by H143. E148 serves as the catalytic For ring-opening step. T161 is modified (phosphothreonine).

Belongs to the glucosamine/galactosamine-6-phosphate isomerase family. As to quaternary structure, homohexamer. In terms of tissue distribution, ubiquitous, with highest expression detected in testis, ovary, placenta, and heart.

It localises to the cytoplasm. It catalyses the reaction alpha-D-glucosamine 6-phosphate + H2O = beta-D-fructose 6-phosphate + NH4(+). It participates in nucleotide-sugar biosynthesis; UDP-N-acetyl-alpha-D-glucosamine biosynthesis; alpha-D-glucosamine 6-phosphate from D-fructose 6-phosphate: step 1/1. With respect to regulation, allosterically activated by N-acetylglucosamine-6-phosphate (GlcNAc6P). Catalyzes the reversible conversion of alpha-D-glucosamine 6-phosphate (GlcN-6P) into beta-D-fructose 6-phosphate (Fru-6P) and ammonium ion, a regulatory reaction step in de novo uridine diphosphate-N-acetyl-alpha-D-glucosamine (UDP-GlcNAc) biosynthesis via hexosamine pathway. Deamination is coupled to aldo-keto isomerization mediating the metabolic flux from UDP-GlcNAc toward Fru-6P. At high ammonium level can drive amination and isomerization of Fru-6P toward hexosamines and UDP-GlcNAc synthesis. Has a role in fine tuning the metabolic fluctuations of cytosolic UDP-GlcNAc and their effects on hyaluronan synthesis that occur during tissue remodeling. The polypeptide is Glucosamine-6-phosphate deaminase 2 (Homo sapiens (Human)).